Here is a 508-residue protein sequence, read N- to C-terminus: GMP synthase [glutamine-hydrolyzing] (508 aa).

The Glutamine amidotransferase type-1 domain occupies 1–189 (MILVLDFGSQ…ALLVCGCEKT (189 aa)). Cys-78 functions as the Nucleophile in the catalytic mechanism. Residues His-163 and Glu-165 contribute to the active site. In terms of domain architecture, GMPS ATP-PPase spans 190 to 383 (WGMQHFAQRE…LGVSQDFLMR (194 aa)). 217–223 (SGGVDST) contributes to the ATP binding site.

As to quaternary structure, homodimer.

The catalysed reaction is XMP + L-glutamine + ATP + H2O = GMP + L-glutamate + AMP + diphosphate + 2 H(+). It functions in the pathway purine metabolism; GMP biosynthesis; GMP from XMP (L-Gln route): step 1/1. Catalyzes the synthesis of GMP from XMP. This chain is GMP synthase [glutamine-hydrolyzing], found in Helicobacter pylori (strain P12).